The primary structure comprises 260 residues: uncharacterized protein (260 aa).

The signal sequence occupies residues 1–22 (MGYIKRIGLYISIFILIVMVAG). Cysteine 23 carries N-palmitoyl cysteine lipidation. A lipid anchor (S-diacylglycerol cysteine) is attached at cysteine 23.

It belongs to the staphylococcal tandem lipoprotein family.

Its subcellular location is the cell membrane. This is an uncharacterized protein from Staphylococcus aureus (strain bovine RF122 / ET3-1).